Here is a 513-residue protein sequence, read N- to C-terminus: ATP synthase subunit alpha (513 aa).

Position 169 to 176 (169 to 176 (GDRQTGKT)) interacts with ATP.

Belongs to the ATPase alpha/beta chains family. F-type ATPases have 2 components, CF(1) - the catalytic core - and CF(0) - the membrane proton channel. CF(1) has five subunits: alpha(3), beta(3), gamma(1), delta(1), epsilon(1). CF(0) has three main subunits: a(1), b(2) and c(9-12). The alpha and beta chains form an alternating ring which encloses part of the gamma chain. CF(1) is attached to CF(0) by a central stalk formed by the gamma and epsilon chains, while a peripheral stalk is formed by the delta and b chains.

The protein resides in the cell inner membrane. It carries out the reaction ATP + H2O + 4 H(+)(in) = ADP + phosphate + 5 H(+)(out). Produces ATP from ADP in the presence of a proton gradient across the membrane. The alpha chain is a regulatory subunit. The chain is ATP synthase subunit alpha from Haemophilus influenzae (strain 86-028NP).